The following is a 258-amino-acid chain: Thrombin-like enzyme CPI-enzyme 2 (258 aa).

An N-terminal signal peptide occupies residues 1 to 18 (MVLIRVLANLLILQLSYA). Positions 19 to 24 (QKSSEL) are excised as a propeptide. One can recognise a Peptidase S1 domain in the interval 25–249 (VIGGDECNIN…YTDWIENIIA (225 aa)). 6 cysteine pairs are disulfide-bonded: C31–C163, C50–C66, C98–C256, C142–C210, C174–C189, and C200–C225. N44 is a glycosylation site (N-linked (GlcNAc...) asparagine). Catalysis depends on H65, which acts as the Charge relay system. 2 N-linked (GlcNAc...) asparagine glycosylation sites follow: N79 and N103. Residue D110 is the Charge relay system of the active site. N-linked (GlcNAc...) asparagine glycosylation occurs at N121. The active-site Charge relay system is the S204.

It belongs to the peptidase S1 family. Snake venom subfamily. In terms of assembly, monomer. Post-translationally, N-glycosylated. In terms of tissue distribution, expressed by the venom gland.

The protein localises to the secreted. Functionally, thrombin-like snake venom serine protease that cleaves fibrinogen beta (FGB) releasing fibrinopeptide B. Promotes capillary permeability-increasing activity through the release of peptides from the beta-chain of fibrinogen. This Gloydius ussuriensis (Ussuri mamushi) protein is Thrombin-like enzyme CPI-enzyme 2.